A 303-amino-acid chain; its full sequence is MYIQILGSAAGGGFPQWNCNCVNCAGFRDGSLRAHARTQSSIALSDDGINWVLCNASPDIRAQLQGFAPMQPGRALRDTGISAIVLMDSQIDHTTGLLSLREGCPHQVWCTDMVHEDLSTGFPLFEMLKHWNGGLSWNRIELQGSFVIPACPNLRFTPFPLRSAAPPYSPHRFDPHPGDNIGLLVEDTRTGGKLFYAPGLGKVDEALAEKMRDADCLLVDGTMWDDDEMQRRGVGTRTGREMGHLAQNGPGGMLEVLEGFPEPRKVLIHINNTNPILDEDSPERAELARRNVEVAFDGMSIEL.

The protein belongs to the PqqB family.

It participates in cofactor biosynthesis; pyrroloquinoline quinone biosynthesis. Its function is as follows. May be involved in the transport of PQQ or its precursor to the periplasm. The polypeptide is Coenzyme PQQ synthesis protein B (Pseudomonas syringae pv. syringae (strain B728a)).